The primary structure comprises 272 residues: Putative pyruvate, phosphate dikinase regulatory protein (272 aa).

Residue 153–160 (GVSRTSKT) coordinates ADP.

The protein belongs to the pyruvate, phosphate/water dikinase regulatory protein family. PDRP subfamily.

It catalyses the reaction N(tele)-phospho-L-histidyl/L-threonyl-[pyruvate, phosphate dikinase] + ADP = N(tele)-phospho-L-histidyl/O-phospho-L-threonyl-[pyruvate, phosphate dikinase] + AMP + H(+). The enzyme catalyses N(tele)-phospho-L-histidyl/O-phospho-L-threonyl-[pyruvate, phosphate dikinase] + phosphate + H(+) = N(tele)-phospho-L-histidyl/L-threonyl-[pyruvate, phosphate dikinase] + diphosphate. In terms of biological role, bifunctional serine/threonine kinase and phosphorylase involved in the regulation of the pyruvate, phosphate dikinase (PPDK) by catalyzing its phosphorylation/dephosphorylation. The protein is Putative pyruvate, phosphate dikinase regulatory protein of Streptococcus sanguinis (strain SK36).